Reading from the N-terminus, the 398-residue chain is Elongation factor Tu (398 aa).

Residues 10–207 form the tr-type G domain; the sequence is KPHVNIGTIG…TVDDYIPDPE (198 aa). A G1 region spans residues 19-26; sequence GHVDHGKT. 19–26 serves as a coordination point for GTP; that stretch reads GHVDHGKT. Residue Thr-26 coordinates Mg(2+). The G2 stretch occupies residues 63–67; it reads GITIN. Positions 84 to 87 are G3; the sequence is DAPG. GTP contacts are provided by residues 84-88 and 139-142; these read DAPGH and NKVD. The tract at residues 139-142 is G4; it reads NKVD. The G5 stretch occupies residues 177–179; it reads SAL.

It belongs to the TRAFAC class translation factor GTPase superfamily. Classic translation factor GTPase family. EF-Tu/EF-1A subfamily. In terms of assembly, monomer.

The protein localises to the cytoplasm. It catalyses the reaction GTP + H2O = GDP + phosphate + H(+). Functionally, GTP hydrolase that promotes the GTP-dependent binding of aminoacyl-tRNA to the A-site of ribosomes during protein biosynthesis. The polypeptide is Elongation factor Tu (Streptococcus mutans serotype c (strain ATCC 700610 / UA159)).